A 126-amino-acid chain; its full sequence is Protein ApaG (126 aa).

In terms of domain architecture, ApaG spans 2–126 (SALDDSIRVE…FRLALPGLLH (125 aa)).

The protein is Protein ApaG of Shewanella sp. (strain MR-7).